The primary structure comprises 217 residues: Carboxylesterase Culp1 (217 aa).

Positions 1–32 (MTPRSLVRIVGVVVATTLALVSAPAGGRAAHA) are cleaved as a signal peptide. Cysteines 35 and 107 form a disulfide. Ser118 (nucleophile) is an active-site residue. Cys177 and Cys184 are joined by a disulfide. Asp181 is a catalytic residue. The Proton donor/acceptor role is filled by His193.

It belongs to the cutinase family.

It is found in the secreted. It carries out the reaction a fatty acid ester + H2O = an aliphatic alcohol + a fatty acid + H(+). In terms of biological role, shows esterase activity, with a preference for short- and medium-chain fatty acids. The polypeptide is Carboxylesterase Culp1 (Mycobacterium bovis (strain ATCC BAA-935 / AF2122/97)).